The following is a 317-amino-acid chain: DNA repair nuclease/redox regulator APEX1 (317 aa).

The interval 1–32 (MPKRGKRAAAEDGEEPKSEPETKKSKGAAKKT) is necessary for interaction with YBX1, binding to RNA, association together with NPM1 to rRNA, endoribonuclease activity on abasic RNA and localization in the nucleoli. Positions 1 to 57 (MPKRGKRAAAEDGEEPKSEPETKKSKGAAKKTEKEAAGEGPVLYEDPPDQKTSASGK) are disordered. At Lys6 the chain carries N6-acetyllysine; by EP300. A Nuclear localization signal (NLS) motif is present at residues 8-12 (AAAED). Residues 15–37 (EPKSEPETKKSKGAAKKTEKEAA) are compositionally biased toward basic and acidic residues. At Ser18 the chain carries Phosphoserine. The necessary for interaction with NPM1 and for efficient rRNA binding stretch occupies residues 22–32 (TKKSKGAAKKT). N6-acetyllysine is present on residues Lys26, Lys30, Lys31, and Lys34. Residue Ser53 is modified to Phosphoserine. Residues 63–79 (ICSWNVDGLRAWIKKKG) carry the Nuclear export signal (NES) motif. Cys64 carries the post-translational modification S-nitrosocysteine; alternate. The cysteines at positions 64 and 92 are disulfide-linked. Residue Asp69 coordinates Mg(2+). Cys92 carries the post-translational modification S-nitrosocysteine; alternate. Mg(2+) is bound at residue Glu95. Residue Tyr170 is part of the active site. An N6-acetyllysine modification is found at Lys196. Residues Asp209 and Asn211 each coordinate Mg(2+). The active-site Proton donor/acceptor is Asp209. Position 232 is a phosphothreonine; by CDK5 (Thr232). Positions 288-317 (HSLLPALCDSKIRSKALGSDHCPITLYLAL) are mitochondrial targeting sequence (MTS). Asp307 contacts Mg(2+). The residue at position 309 (Cys309) is an S-nitrosocysteine.

This sequence belongs to the DNA repair enzymes AP/ExoA family. In terms of assembly, monomer. Homodimer; disulfide-linked. Component of the SET complex, composed of at least APEX1, SET, ANP32A, HMGB2, NME1 and TREX1. Associates with the dimer XRCC5/XRCC6 in a DNA-dependent manner. Interacts with SIRT1; the interaction is increased in the context of genotoxic stress. Interacts with HDAC1, HDAC2 and HDAC3; the interactions are not dependent on the APEX1 acetylation status. Interacts with XRCC1; the interaction is induced by SIRT1 and increased with the APEX1 acetylated form. Interacts with NPM1 (via N-terminal domain); the interaction is RNA-dependent and decreases in hydrogen peroxide-damaged cells. Interacts (via N-terminus) with YBX1 (via C-terminus); the interaction is increased in presence of APEX1 acetylated. Interacts with HNRNPL; the interaction is DNA-dependent. Interacts (via N-terminus) with KPNA1 and KPNA2. Interacts with TXN; the interaction stimulates the FOS/JUN AP-1 complex DNA-binding activity in a redox-dependent manner. Interacts with GZMA, KRT8, MDM2, POLB, PRDX6, PRPF19, RPLP0, TOMM20 and WDR77. Binds to CDK5. Mg(2+) serves as cofactor. Mn(2+) is required as a cofactor. Phosphorylated. Phosphorylation by kinase PKC or casein kinase CK2 results in enhanced redox activity that stimulates binding of the FOS/JUN AP-1 complex to its cognate binding site. AP-endodeoxyribonuclease activity is not affected by CK2-mediated phosphorylation. Phosphorylation of Thr-232 by CDK5 in response to MPP(+)/MPTP (1-methyl-4-phenylpyridinium) reduces AP-endodeoxyribonuclease activity resulting in accumulation of DNA damage and contributing to neuronal death. In terms of processing, acetylated on Lys-6. Acetylation is increased by the transcriptional coactivator EP300 acetyltransferase, genotoxic agents like H(2)O(2) and methyl methanesulfonate (MMS). Acetylation increases its binding affinity to the negative calcium response element (nCaRE) DNA promoter. The acetylated form induces a stronger binding of YBX1 to the Y-box sequence in the MDR1 promoter than the unacetylated form. Deacetylated on lysines. Lys-6 is deacetylated by SIRT1. Post-translationally, cleaved at Lys-30 by granzyme A to create the mitochondrial form; leading in reduction of binding to DNA, AP endodeoxyribonuclease activity, redox activation of transcription factors and to enhanced cell death. Cleaved by granzyme K; leading to intracellular ROS accumulation and enhanced cell death after oxidative stress. Cys-64 and Cys-92 are nitrosylated in response to nitric oxide (NO) and lead to the exposure of the nuclear export signal (NES). In terms of processing, ubiquitinated by MDM2; leading to translocation to the cytoplasm and proteasomal degradation.

The protein localises to the nucleus. It is found in the nucleolus. Its subcellular location is the nucleus speckle. It localises to the endoplasmic reticulum. The protein resides in the cytoplasm. The protein localises to the mitochondrion. It carries out the reaction a deoxyribonucleotide-2'-deoxyribose-5'-monophosphate-DNA + H2O = a 5'-end 2'-deoxyribose-5'-monophosphate-DNA + a 3'-end 2'-deoxyribonucleotide-DNA + H(+). It catalyses the reaction Exonucleolytic cleavage in the 3'- to 5'-direction to yield nucleoside 5'-phosphates.. The catalysed reaction is a 3'-end 2'-deoxyribonucleotide-3'-phosphoglycolate-DNA + H2O = 2-phosphoglycolate + a 3'-end 2'-deoxyribonucleotide-DNA + H(+). The enzyme catalyses a 3'-end 2'-deoxyribonucleotide-8-oxoguanine-DNA + H2O = 8-oxo-dGMP + a 3'-end 2'-deoxyribonucleotide-DNA + H(+). With respect to regulation, NPM1 stimulates endodeoxyribonuclease activity on double-stranded DNA with AP sites, but inhibits endoribonuclease activity on single-stranded RNA containing AP sites. Functionally, multifunctional protein that plays a central role in the cellular response to oxidative stress. The two major activities of APEX1 are DNA repair and redox regulation of transcriptional factors. Functions as an apurinic/apyrimidinic (AP) endodeoxyribonuclease in the base excision repair (BER) pathway of DNA lesions induced by oxidative and alkylating agents. Initiates repair of AP sites in DNA by catalyzing hydrolytic incision of the phosphodiester backbone immediately adjacent to the damage, generating a single-strand break with 5'-deoxyribose phosphate and 3'-hydroxyl ends. Also incises at AP sites in the DNA strand of DNA/RNA hybrids, single-stranded DNA regions of R-loop structures, and single-stranded RNA molecules. Operates at switch sites of immunoglobulin (Ig) constant regions where it mediates Ig isotype class switch recombination. Processes AP sites induced by successive action of AICDA and UNG. Generates staggered nicks in opposite DNA strands resulting in the formation of double-strand DNA breaks that are finally resolved via non-homologous end joining repair pathway. Has 3'-5' exodeoxyribonuclease activity on mismatched deoxyribonucleotides at the 3' termini of nicked or gapped DNA molecules during short-patch BER. Possesses DNA 3' phosphodiesterase activity capable of removing lesions (such as phosphoglycolate and 8-oxoguanine) blocking the 3' side of DNA strand breaks. Also acts as an endoribonuclease involved in the control of single-stranded RNA metabolism. Plays a role in regulating MYC mRNA turnover by preferentially cleaving in between UA and CA dinucleotides of the MYC coding region determinant (CRD). In association with NMD1, plays a role in the rRNA quality control process during cell cycle progression. Acts as a loading factor for POLB onto non-incised AP sites in DNA and stimulates the 5'-terminal deoxyribose 5'-phosphate (dRp) excision activity of POLB. Exerts reversible nuclear redox activity to regulate DNA binding affinity and transcriptional activity of transcriptional factors by controlling the redox status of their DNA-binding domain, such as the FOS/JUN AP-1 complex after exposure to IR. Involved in calcium-dependent down-regulation of parathyroid hormone (PTH) expression by binding to negative calcium response elements (nCaREs). Together with HNRNPL or the dimer XRCC5/XRCC6, associates with nCaRE, acting as an activator of transcriptional repression. May also play a role in the epigenetic regulation of gene expression by participating in DNA demethylation. Stimulates the YBX1-mediated MDR1 promoter activity, when acetylated at Lys-6 and Lys-7, leading to drug resistance. Plays a role in protection from granzyme-mediated cellular repair leading to cell death. Binds DNA and RNA. Associates, together with YBX1, on the MDR1 promoter. Together with NPM1, associates with rRNA. The polypeptide is DNA repair nuclease/redox regulator APEX1 (Apex1) (Rattus norvegicus (Rat)).